The primary structure comprises 465 residues: MFIYDTKLKQKVPFEPLVHNKANIYVCGPTVYDDAHLGHARSAIAFDLLRRTLELSGYEVVLVRNFTDIDDKIINKAFKENKSIQELSSIYIESYTRDLNALNVKQPSLEPKASEYLDAMVRMIETLLEKNFAYRVSNGDIYLDTSKDKDYGSLSMHNSSVEFSRIGLVQEKRLEQDFVLWKSYKGDNDVGFDSPLGKGRPGWHIECSSMVFETLALANAPYQIDIHAGGTDLLFPHHENEACQTRCAFGVEIAKYWMHNGFVNINNEKMSKSLGNSFFIKDALKNYDGEILRNYLLGVHYRSVLNFNEEDLLMSKKRLDKIYRLKQRVLGTLGGINPNFKKEILECMQDDLNVSKALSVLESMLSSTNEKLDQNPKNKALKGEILANLKFIEELLGIGFKDPSAYFQLGVSESEKQEIENKIEERKRAKEQKDFLKADSIREELLQQKIALMDTPQGTIWEKLF.

Position 27 (cysteine 27) interacts with Zn(2+). Residues proline 29–histidine 39 carry the 'HIGH' region motif. 3 residues coordinate Zn(2+): cysteine 207, histidine 237, and glutamate 241. The short motif at lysine 269–serine 273 is the 'KMSKS' region element. Residue lysine 272 coordinates ATP.

The protein belongs to the class-I aminoacyl-tRNA synthetase family. Monomer. Zn(2+) serves as cofactor.

The protein resides in the cytoplasm. The enzyme catalyses tRNA(Cys) + L-cysteine + ATP = L-cysteinyl-tRNA(Cys) + AMP + diphosphate. The chain is Cysteine--tRNA ligase (cysS) from Helicobacter pylori (strain J99 / ATCC 700824) (Campylobacter pylori J99).